We begin with the raw amino-acid sequence, 395 residues long: 8-amino-3,8-dideoxy-alpha-D-manno-octulosonate transaminase (395 aa).

An N6-(pyridoxal phosphate)lysine modification is found at Lys186.

The protein belongs to the DegT/DnrJ/EryC1 family. Pyridoxal 5'-phosphate is required as a cofactor.

The enzyme catalyses 8-amino-3,8-dideoxy-alpha-D-manno-octulosonate + 2-oxoglutarate = 3,8-dideoxy-8-oxo-alpha-D-manno-octulosonate + L-glutamate. It participates in bacterial outer membrane biogenesis; lipopolysaccharide biosynthesis. Catalyzes the second (last) step of the biosynthesis of Kdo8N (8-amino-3,8-dideoxy-D-manno-octulosonate) from Kdo (3-deoxy-D-manno-octulosonate). In Shewanella oneidensis (strain ATCC 700550 / JCM 31522 / CIP 106686 / LMG 19005 / NCIMB 14063 / MR-1), this protein is 8-amino-3,8-dideoxy-alpha-D-manno-octulosonate transaminase.